The sequence spans 339 residues: EEIG family member 2 (339 aa).

A C2 NT-type domain is found at M1 to L111. S197 carries the post-translational modification Phosphoserine. Residues T226–P262 form a disordered region. The segment covering T230–T248 has biased composition (low complexity). The span at A249–A259 shows a compositional bias: basic and acidic residues. S255, S267, S299, S300, and S329 each carry phosphoserine.

It belongs to the EEIG family. As to expression, expressed in bone marrow-derived macrophages.

This Mus musculus (Mouse) protein is EEIG family member 2 (Eeig2).